Reading from the N-terminus, the 397-residue chain is L-aspartate--L-methionine ligase (397 aa).

The ATP-grasp domain occupies 131 to 347; sequence VALNNKARIP…FFNTILKYVK (217 aa). ADP is bound by residues lysine 136, valine 171, lysine 173, glycine 183, valine 186, isoleucine 188, glutamate 215, glutamine 216, isoleucine 218, asparagine 223, and threonine 246. Aspartate 288 contacts Mg(2+). Residues leucine 290 and isoleucine 300 each coordinate ADP. Mg(2+) is bound at residue aspartate 301. Catalysis depends on arginine 305, which acts as the Critical for catalysis.

Primarily a monomer in solution. Minor homodimer formation. Mg(2+) is required as a cofactor.

It carries out the reaction L-aspartate + L-methionine + ATP = L-aspartyl-L-methionine + ADP + phosphate + H(+). Its pathway is amino-acid metabolism. In terms of biological role, L-amino acid ligase, which preferentially catalyzes the formation of L-aspartyl-L-methionine dipeptide from L-aspartate and L-methionine in the presence of ATP. Less active with L-asparagine and L-methionine as substrates. Less active with L-aspartate and either L-phenylalanine, L-valine, L-leucine or L-isoleucine as substrates. Decreased activity when L-methionine is substituted with seleno-DL-methionine, L-homocysteine, L-methionine sulfoxide, L-methionine sulfoximine and o-acetyl-L-serine. Decreased activity with acetylation of L-methionine amino group. Decreased activity by modification of L-methionine carboxylate to L-methionine methyl ester. No activity when L-methionine is substituted with L-homoserine. No activity with formylation of L-methionine amino group. No activity by modification of L-methionine carboxylate to L-methionine-glycine carboxylate. No activity when L-aspartate substrate is replaced by analogs such as L-homoserine, DL-aspartate beta-methyl ester, L-glutamate or o-acetyl-L-serine. No activity when L-aspartate amino and alpha-carboxylate groups are modified to L-malate, glycine-L-aspartate, L-aspartate-glycine or N-carbamoyl-DL-aspartate. No activity with L-methionine or L-aspartate as sole substrates. No activity in presence of other nucleoside triphosphates including GTP, CTP, UTP, TTP or ITP. Involved in sulfur amino acid metabolism. This chain is L-aspartate--L-methionine ligase, found in Staphylococcus aureus (strain NCTC 8325 / PS 47).